The chain runs to 190 residues: Ladderlectin (190 aa).

The N-terminal stretch at 1–18 (MAMLTISLLLCAAVALNG) is a signal peptide. One can recognise a C-type lectin domain in the interval 60 to 179 (GSRCFMFVET…GNSFPSGVLQ (120 aa)). Residues cysteine 153 and cysteine 169 are joined by a disulfide bond.

In terms of assembly, multimeric. In terms of tissue distribution, expressed in cells of the branchial epithelium, hepatic sinusoids, biliary epithelium, renal interstitium, skin, and sub-mucosal granular layer of the intestine. Highly expressed in caudal kidney. Moderately expressed in liver. Weakly expressed in gill, spleen, cranial kidney and skin. Isoform 1 is highly expressed in intestine. Isoform 2 is weakly expressed in intestine.

Lectin that binds sepharose in a calcium-dependent manner. This Oncorhynchus mykiss (Rainbow trout) protein is Ladderlectin.